A 309-amino-acid polypeptide reads, in one-letter code: Nucleotide-binding protein cgR_1639 (309 aa).

32 to 39 (GMSGAGLS) is a binding site for ATP. Residue 83–86 (DVRS) coordinates GTP.

It belongs to the RapZ-like family.

In terms of biological role, displays ATPase and GTPase activities. The protein is Nucleotide-binding protein cgR_1639 of Corynebacterium glutamicum (strain R).